The following is a 519-amino-acid chain: Light-independent protochlorophyllide reductase subunit B (519 aa).

Asp-36 contacts [4Fe-4S] cluster. Asp-274 (proton donor) is an active-site residue. Position 409-410 (409-410) interacts with substrate; it reads GL. The interval 426-465 is disordered; the sequence is DEAGPSHHGGHSPKPSEAARTPDKVEERADPAPEAPQTGS. A compositionally biased stretch (basic and acidic residues) spans 445-456; it reads RTPDKVEERADP.

It belongs to the ChlB/BchB/BchZ family. Protochlorophyllide reductase is composed of three subunits; BchL, BchN and BchB. Forms a heterotetramer of two BchB and two BchN subunits. The cofactor is [4Fe-4S] cluster.

The enzyme catalyses chlorophyllide a + oxidized 2[4Fe-4S]-[ferredoxin] + 2 ADP + 2 phosphate = protochlorophyllide a + reduced 2[4Fe-4S]-[ferredoxin] + 2 ATP + 2 H2O. It functions in the pathway porphyrin-containing compound metabolism; bacteriochlorophyll biosynthesis (light-independent). Functionally, component of the dark-operative protochlorophyllide reductase (DPOR) that uses Mg-ATP and reduced ferredoxin to reduce ring D of protochlorophyllide (Pchlide) to form chlorophyllide a (Chlide). This reaction is light-independent. The NB-protein (BchN-BchB) is the catalytic component of the complex. The polypeptide is Light-independent protochlorophyllide reductase subunit B (Jannaschia sp. (strain CCS1)).